Consider the following 250-residue polypeptide: Ribosome-inactivating protein luffin-B (250 aa).

The active site involves Glu-160.

The protein belongs to the ribosome-inactivating protein family. Type 1 RIP subfamily.

The enzyme catalyses Endohydrolysis of the N-glycosidic bond at one specific adenosine on the 28S rRNA.. The sequence is that of Ribosome-inactivating protein luffin-B from Luffa aegyptiaca (Sponge gourd).